We begin with the raw amino-acid sequence, 257 residues long: Adenylate kinase (257 aa).

52–57 (GAGKGT) serves as a coordination point for ATP. Residues 72–101 (ATGDMLRSQVAKKTELGKEAKKIMDQGGLV) are NMP. Residues T73, R78, 99 to 101 (GLV), 128 to 131 (GFPR), and Q135 contribute to the AMP site. The segment at 169–206 (GRLVHPASGRSYHKIFNPPKNDMKDDVTGEPLIQRSDD) is LID. Residues R170 and 179–180 (SY) contribute to the ATP site. The AMP site is built by R203 and R214. Q242 provides a ligand contact to ATP.

The protein belongs to the adenylate kinase family. AK2 subfamily. Monomer.

The protein resides in the cytoplasm. Its subcellular location is the cytosol. It localises to the mitochondrion intermembrane space. It catalyses the reaction AMP + ATP = 2 ADP. Functionally, catalyzes the reversible transfer of the terminal phosphate group between ATP and AMP. Plays an important role in cellular energy homeostasis and in adenine nucleotide metabolism. Adenylate kinase activity is critical for regulation of the phosphate utilization and the AMP de novo biosynthesis pathways. The sequence is that of Adenylate kinase (adk1) from Neosartorya fischeri (strain ATCC 1020 / DSM 3700 / CBS 544.65 / FGSC A1164 / JCM 1740 / NRRL 181 / WB 181) (Aspergillus fischerianus).